A 207-amino-acid chain; its full sequence is MARSKSSNRWLEEHVNDPFVKQAQQDGYRSRASYKLLEINNKDRLIKPTDLVVDLGSAPGGWSQVAAKLVGHKGRVVASDILPMDPIAGVEFIQGDFTEQEVFDQIMAILDGARADVVISDMAPNISGVNAADQAASMYLVELALDMACQVLKPKGSFVAKVFHGEGYDEYVKTVRESFDKVVIRKPDSSRARSREVYLVAKGFRVA.

S-adenosyl-L-methionine contacts are provided by Gly-60, Trp-62, Asp-80, Asp-96, and Asp-121. Lys-161 functions as the Proton acceptor in the catalytic mechanism.

Belongs to the class I-like SAM-binding methyltransferase superfamily. RNA methyltransferase RlmE family.

It is found in the cytoplasm. It carries out the reaction uridine(2552) in 23S rRNA + S-adenosyl-L-methionine = 2'-O-methyluridine(2552) in 23S rRNA + S-adenosyl-L-homocysteine + H(+). Functionally, specifically methylates the uridine in position 2552 of 23S rRNA at the 2'-O position of the ribose in the fully assembled 50S ribosomal subunit. This Marinobacter nauticus (strain ATCC 700491 / DSM 11845 / VT8) (Marinobacter aquaeolei) protein is Ribosomal RNA large subunit methyltransferase E.